A 147-amino-acid chain; its full sequence is NAD(P)H-quinone oxidoreductase subunit N (147 aa).

The protein belongs to the complex I NdhN subunit family. In terms of assembly, NDH-1 can be composed of about 15 different subunits; different subcomplexes with different compositions have been identified which probably have different functions.

It localises to the cellular thylakoid membrane. The catalysed reaction is a plastoquinone + NADH + (n+1) H(+)(in) = a plastoquinol + NAD(+) + n H(+)(out). It carries out the reaction a plastoquinone + NADPH + (n+1) H(+)(in) = a plastoquinol + NADP(+) + n H(+)(out). Its function is as follows. NDH-1 shuttles electrons from an unknown electron donor, via FMN and iron-sulfur (Fe-S) centers, to quinones in the respiratory and/or the photosynthetic chain. The immediate electron acceptor for the enzyme in this species is believed to be plastoquinone. Couples the redox reaction to proton translocation, and thus conserves the redox energy in a proton gradient. Cyanobacterial NDH-1 also plays a role in inorganic carbon-concentration. The chain is NAD(P)H-quinone oxidoreductase subunit N from Synechococcus sp. (strain JA-2-3B'a(2-13)) (Cyanobacteria bacterium Yellowstone B-Prime).